Here is a 366-residue protein sequence, read N- to C-terminus: MYGILVLEDGTIIRGDGFGAEAEVLGELVFNTSMTGYVEILTDPSYKGQIITMTYPLEGNYGVEKEWFESDGIKAEGFVVKDMTGLELDEFLKEYNIPGISGVDTRYITRKIRSKGVIRSLLKTSTNPITKDEETELIKKVVEYPDISEIDLVPEVSTKETVTYNAENEKTSCVLIDCGVKQSIVNCLVERGCSVIKVPYNSKKEEILSYNPDFVLVSNGPGDPENMLETVDTVKNLIGTLPVTGICLGHQLITIALGGKTYKLKFGHRGGNQPVKDIESGKVYITSQNHGFATDDKIVPAGSELMHMNLNDDTVEGIRKIESEDIKNTVWSVQYHPEAGPGPHDARFLFDEMVELGIKFKAEKAY.

The segment at 1–172 is CPSase; it reads MYGILVLEDG…TYNAENEKTS (172 aa). Residues S45, G220, and G222 each contribute to the L-glutamine site. The 192-residue stretch at 172–363 folds into the Glutamine amidotransferase type-1 domain; sequence SCVLIDCGVK…VELGIKFKAE (192 aa). C247 serves as the catalytic Nucleophile. L-glutamine-binding residues include L248, Q251, N289, G291, and F292. Active-site residues include H336 and E338.

Belongs to the CarA family. In terms of assembly, composed of two chains; the small (or glutamine) chain promotes the hydrolysis of glutamine to ammonia, which is used by the large (or ammonia) chain to synthesize carbamoyl phosphate. Tetramer of heterodimers (alpha,beta)4.

The enzyme catalyses hydrogencarbonate + L-glutamine + 2 ATP + H2O = carbamoyl phosphate + L-glutamate + 2 ADP + phosphate + 2 H(+). The catalysed reaction is L-glutamine + H2O = L-glutamate + NH4(+). It participates in amino-acid biosynthesis; L-arginine biosynthesis; carbamoyl phosphate from bicarbonate: step 1/1. It functions in the pathway pyrimidine metabolism; UMP biosynthesis via de novo pathway; (S)-dihydroorotate from bicarbonate: step 1/3. In terms of biological role, small subunit of the glutamine-dependent carbamoyl phosphate synthetase (CPSase). CPSase catalyzes the formation of carbamoyl phosphate from the ammonia moiety of glutamine, carbonate, and phosphate donated by ATP, constituting the first step of 2 biosynthetic pathways, one leading to arginine and/or urea and the other to pyrimidine nucleotides. The small subunit (glutamine amidotransferase) binds and cleaves glutamine to supply the large subunit with the substrate ammonia. The chain is Carbamoyl phosphate synthase small chain from Methanococcus maripaludis (strain C7 / ATCC BAA-1331).